The sequence spans 30 residues: Small toxic protein BsrE (30 aa).

Residues 4-24 traverse the membrane as a helical segment; it reads FQALMLMLAIGSFIIALLTYI.

It localises to the cell membrane. In terms of biological role, toxic component of a type I toxin-antitoxin (TA) system; overexpression in the absence of cognate antisense antitoxin SR5 RNA leads to cell lysis. Base pairing occurs between the 3' UTRs of bsrE mRNA and SR5 RNA which leads to bsrE mRNA degradation initiated by RNase III (rnc) and RNase J1 (rnjA). Genetic evidence suggests an unidentified RNA-binding protein may exist that promotes TA RNA interaction. The sequence is that of Small toxic protein BsrE from Bacillus subtilis (strain 168).